Reading from the N-terminus, the 203-residue chain is Large ribosomal subunit protein uL13 (203 aa).

Position 2 is an N-acetylalanine (A2). Residue R59 is modified to Citrulline. A Phosphoserine modification is found at S77. The residue at position 140 (R140) is a Citrulline. Position 191 is an N6-acetyllysine (K191).

The protein belongs to the universal ribosomal protein uL13 family. Component of the 60S ribosome. Component of the GAIT complex. Interacts with EIF4G1. Phosphorylation at Ser-77 upon interferon-gamma treatment in macrophages involves a DAPK1-DAPK3 kinase cascade and is causing release from the ribosome, association with the GAIT complex and subsequent involvement in transcript-selective translation inhibition. Post-translationally, citrullinated by PADI4.

The protein localises to the cytoplasm. Functionally, associated with ribosomes but is not required for canonical ribosome function and has extra-ribosomal functions. Component of the GAIT (gamma interferon-activated inhibitor of translation) complex which mediates interferon-gamma-induced transcript-selective translation inhibition in inflammation processes. Upon interferon-gamma activation and subsequent phosphorylation dissociates from the ribosome and assembles into the GAIT complex which binds to stem loop-containing GAIT elements in the 3'-UTR of diverse inflammatory mRNAs (such as ceruplasmin) and suppresses their translation. In the GAIT complex interacts with m7G cap-bound eIF4G at or near the eIF3-binding site and blocks the recruitment of the 43S ribosomal complex. Involved in methylation of rRNA. This Bos taurus (Bovine) protein is Large ribosomal subunit protein uL13 (RPL13A).